The sequence spans 243 residues: Bidirectional sugar transporter SWEET2a (243 aa).

At 1 to 23 (MDWAAPALTSFVADSSYRHLCCY) the chain is on the extracellular side. Residues 24 to 44 (GAGIAGNVFAFVLFISPLPTF) traverse the membrane as a helical segment. In terms of domain architecture, MtN3/slv 1 spans 24–111 (GAGIAGNVFA…AVFIAFADAK (88 aa)). At 45 to 57 (KRIVRNGSTEQFS) the chain is on the cytoplasmic side. The chain crosses the membrane as a helical span at residues 58–80 (AMPYIYSLLNCLICMWYGLPFVS). Residues 81-89 (YGVVLVATV) are Extracellular-facing. The helical transmembrane segment at 90-110 (NSIGAVFQLAYTAVFIAFADA) threads the bilayer. Over 111-117 (KQRLKVS) the chain is Cytoplasmic. The chain crosses the membrane as a helical span at residues 118–138 (ALLAAVFVVFGLIVFVSLALL). At 139 to 145 (DHPTRQM) the chain is on the extracellular side. A helical membrane pass occupies residues 146-166 (FVGYLSVASLIFMFASPLSII). The MtN3/slv 2 domain maps to 147 to 230 (VGYLSVASLI…VLYAYFRKGS (84 aa)). Over 167 to 179 (NLVIRTKSVEYMP) the chain is Cytoplasmic. The chain crosses the membrane as a helical span at residues 180–200 (FYLSLSMFLMSASFFGYGVLL). The Extracellular segment spans residues 201–202 (ND). Residues 203–223 (FFIYIPNGIGTILGIIQLVLY) form a helical membrane-spanning segment. At 224-243 (AYFRKGSSEEAKLPLLVTHT) the chain is on the cytoplasmic side.

This sequence belongs to the SWEET sugar transporter family. As to quaternary structure, forms homooligomers and/or heterooligomers.

Its subcellular location is the cell membrane. Mediates both low-affinity uptake and efflux of sugar across the plasma membrane. This is Bidirectional sugar transporter SWEET2a from Sorghum bicolor (Sorghum).